Reading from the N-terminus, the 343-residue chain is MESTPKKAPRSKFPALLVVALALVALVFVIWRVDSAPSTNDAYASADTIDVVPEVSGRIVELAVTDNQAVKQGDLLFRIDPRPYEANLAKAEASLAALDKQIMLTQRSVDAQQFGADSVNATVEKARAAAKQASDTLRRTEPLLREGFVSAEEVDRARTAQRAAEADLNAVLLQAQSAASAVSGVDALVAQRAAVEADIALTKLHLEMATVRAPFDGRVISLKTSVGQFASAMRPIFTLIDTRHWYVIANFRETDLKNIRSGTPATIRLMSDSGKTFEGKVDSIGYGVLPDDGGLVLGGLPKVSRSINWVRVAQRFPVKIMVDKPDPEMFRIGASAVANLEPQ.

Residues 1-12 (MESTPKKAPRSK) are Cytoplasmic-facing. A helical; Signal-anchor for type II membrane protein transmembrane segment spans residues 13–33 (FPALLVVALALVALVFVIWRV). Residues 34–343 (DSAPSTNDAY…ASAVANLEPQ (310 aa)) lie on the Periplasmic side of the membrane.

This sequence belongs to the membrane fusion protein (MFP) (TC 8.A.1) family. In terms of assembly, could be part of a tripartite efflux system composed of MdtN, MdtO and MdtP.

It is found in the cell inner membrane. Functionally, could be involved in resistance to puromycin, acriflavine and tetraphenylarsonium chloride. In Escherichia coli O6:H1 (strain CFT073 / ATCC 700928 / UPEC), this protein is Multidrug resistance protein MdtN (mdtN).